We begin with the raw amino-acid sequence, 443 residues long: ATP-dependent protease ATPase subunit HslU (443 aa).

ATP-binding positions include isoleucine 18 and glycine 60–glutamate 65. Residues proline 137–arginine 156 are disordered. Over residues glutamine 145–arginine 156 the composition is skewed to polar residues. Residues aspartate 256, glutamate 321, and arginine 393 each coordinate ATP.

It belongs to the ClpX chaperone family. HslU subfamily. As to quaternary structure, a double ring-shaped homohexamer of HslV is capped on each side by a ring-shaped HslU homohexamer. The assembly of the HslU/HslV complex is dependent on binding of ATP.

The protein localises to the cytoplasm. Its function is as follows. ATPase subunit of a proteasome-like degradation complex; this subunit has chaperone activity. The binding of ATP and its subsequent hydrolysis by HslU are essential for unfolding of protein substrates subsequently hydrolyzed by HslV. HslU recognizes the N-terminal part of its protein substrates and unfolds these before they are guided to HslV for hydrolysis. This Vibrio vulnificus (strain YJ016) protein is ATP-dependent protease ATPase subunit HslU.